The primary structure comprises 634 residues: Polyadenylate-binding protein 1A (634 aa).

RRM domains lie at alanine 11–arginine 89, glycine 99–serine 175, threonine 191–lysine 268, and valine 294–arginine 370. The region spanning glutamine 541–alanine 618 is the PABC domain.

The protein belongs to the polyadenylate-binding protein type-1 family. As to quaternary structure, interacts with ybx1; interaction recruits pabpc1a on C5-methylcytosine (m5C)-containing mRNAs, preventing their degradation.

Its subcellular location is the cytoplasm. Functionally, binds the poly(A) tail of mRNA. Prevents mRNA deadenylation and confers poly(A) stability. Binds to N6-methyladenosine (m6A)-containing mRNAs. Stimulates the translation of mRNAs to which it is bound, acting, at least in part, with dazl. Involved in the maternal-to-zygotic transition in early embryo via interaction with ybx1: interaction recruits pabpc1a on C5-methylcytosine (m5C)-containing maternal mRNAs, preventing their degradation. The chain is Polyadenylate-binding protein 1A from Danio rerio (Zebrafish).